Here is a 97-residue protein sequence, read N- to C-terminus: Citrate lyase acyl carrier protein (97 aa).

Position 14 is an O-(phosphoribosyl dephospho-coenzyme A)serine (S14).

It belongs to the CitD family. Oligomer with a subunit composition of (alpha,beta,gamma)6.

The protein localises to the cytoplasm. In terms of biological role, covalent carrier of the coenzyme of citrate lyase. In Oenococcus oeni (strain ATCC BAA-331 / PSU-1), this protein is Citrate lyase acyl carrier protein.